The primary structure comprises 105 residues: MIYTTTDTIPGKEIAEVRGVVTGNVVQSKHIGRDLMAGLKSIVGGEIRGYTEMMTEARDIAIQRMVEQANQKGADAIVGIRFTTSSIVDGSSEILAFGTAVKLVE.

It belongs to the UPF0145 family.

This Vibrio parahaemolyticus serotype O3:K6 (strain RIMD 2210633) protein is UPF0145 protein VP1283.